The following is a 221-amino-acid chain: Histone H1C (221 aa).

Low complexity-rich tracts occupy residues 1-11 and 27-44; these read MTETAATETTP and KKAA…PSAS. 2 disordered regions span residues 1–44 and 123–221; these read MTET…PSAS and AKKK…AAKK. Residues 39–112 enclose the H15 domain; sequence SGPSASELIV…GASGSFKLNK (74 aa). Composition is skewed to basic residues over residues 123–150 and 158–221; these read AKKK…KPKK and SPKK…AAKK.

This sequence belongs to the histone H1/H5 family.

The protein localises to the nucleus. Its subcellular location is the chromosome. Functionally, histones H1 are necessary for the condensation of nucleosome chains into higher-order structures. The protein is Histone H1C of Xenopus laevis (African clawed frog).